The sequence spans 396 residues: Capsular polysaccharide biosynthesis protein CapF (396 aa).

Transmembrane regions (helical) follow at residues 7–27 (YMFVANILSALCKFLILLVIV), 41–61 (ALVITAPIFLFISLKIRSVIV), 74–94 (AILSLNIITLIFVAIFVYVLG), 101–121 (ILIVSLIKLFENIKEVPYGIY), 129–149 (LLGISMGIYNILSLILFYIIY), 153–173 (HNLNMALLFLVISCIFSFAII), 198–218 (IFILTIPLAFSSALGSLNTGI), 232–252 (LGIFSTIAYVLVIGGLFANSI), 279–299 (MVFIGIFIGMCSVILSLFLGE), 315–335 (IILIILSFGLLFILSGIFLGT), 351–371 (LILLFCILIFSFLLIPKYSLL), and 372–392 (GAALTITISQFVALISYYYFY).

It belongs to the polysaccharide synthase family.

Its subcellular location is the cell membrane. It functions in the pathway capsule biogenesis; capsule polysaccharide biosynthesis. Functionally, required for the biosynthesis of type 1 capsular polysaccharide. This is Capsular polysaccharide biosynthesis protein CapF (capF) from Staphylococcus aureus.